The following is a 262-amino-acid chain: Thiazole synthase (262 aa).

The Schiff-base intermediate with DXP role is filled by lysine 97. 1-deoxy-D-xylulose 5-phosphate contacts are provided by residues glycine 158, 185–186 (AG), and 207–208 (NT). Residues 243–262 (DKAQASTPTVGQPFWHSAEY) are disordered.

It belongs to the ThiG family. As to quaternary structure, homotetramer. Forms heterodimers with either ThiH or ThiS.

It is found in the cytoplasm. The enzyme catalyses [ThiS sulfur-carrier protein]-C-terminal-Gly-aminoethanethioate + 2-iminoacetate + 1-deoxy-D-xylulose 5-phosphate = [ThiS sulfur-carrier protein]-C-terminal Gly-Gly + 2-[(2R,5Z)-2-carboxy-4-methylthiazol-5(2H)-ylidene]ethyl phosphate + 2 H2O + H(+). Its pathway is cofactor biosynthesis; thiamine diphosphate biosynthesis. Catalyzes the rearrangement of 1-deoxy-D-xylulose 5-phosphate (DXP) to produce the thiazole phosphate moiety of thiamine. Sulfur is provided by the thiocarboxylate moiety of the carrier protein ThiS. In vitro, sulfur can be provided by H(2)S. This Neisseria meningitidis serogroup B (strain ATCC BAA-335 / MC58) protein is Thiazole synthase.